The sequence spans 99 residues: Small ribosomal subunit protein bS18 (99 aa).

It belongs to the bacterial ribosomal protein bS18 family. In terms of assembly, part of the 30S ribosomal subunit. Forms a tight heterodimer with protein bS6.

Binds as a heterodimer with protein bS6 to the central domain of the 16S rRNA, where it helps stabilize the platform of the 30S subunit. The sequence is that of Small ribosomal subunit protein bS18 from Christiangramia forsetii (strain DSM 17595 / CGMCC 1.15422 / KT0803) (Gramella forsetii).